The following is a 43-amino-acid chain: Neurotrophin-3 (43 aa).

This sequence belongs to the NGF-beta family.

Its subcellular location is the secreted. In terms of biological role, seems to promote the survival of visceral and proprioceptive sensory neurons. The protein is Neurotrophin-3 (ntf3) of Raja clavata (Thornback ray).